A 368-amino-acid polypeptide reads, in one-letter code: Putative potassium channel KAT5 (368 aa).

Helical transmembrane passes span 33 to 53 (WWHM…PFEL), 97 to 117 (LLNL…ARVE), and 132 to 152 (LLCV…WMVF). The pore-forming intramembrane region spans 180-199 (CAVYWSITTLATVGYGDLHA). Residues 206–226 (LFSIAFMLFNMGLTSYIIGNI) traverse the membrane as a helical segment. Residue 225–344 (NITNLVVRET…CIVFSNFILV (120 aa)) participates in a nucleoside 3',5'-cyclic phosphate binding.

Belongs to the potassium channel family. Plant (TC 1.A.1.4) subfamily.

The protein resides in the membrane. Functionally, putative inward-rectifying potassium channel. In Oryza sativa subsp. japonica (Rice), this protein is Putative potassium channel KAT5.